Reading from the N-terminus, the 369-residue chain is Glutamate 5-kinase (369 aa).

An ATP-binding site is contributed by K8. Substrate contacts are provided by S49, D136, and N148. ATP contacts are provided by residues 168 to 169 (TD) and 211 to 217 (TGGMATK). Residues 276 to 354 (TGKLYLDSGA…DEISQILGYG (79 aa)) enclose the PUA domain.

The protein belongs to the glutamate 5-kinase family.

The protein resides in the cytoplasm. The enzyme catalyses L-glutamate + ATP = L-glutamyl 5-phosphate + ADP. Its pathway is amino-acid biosynthesis; L-proline biosynthesis; L-glutamate 5-semialdehyde from L-glutamate: step 1/2. Its function is as follows. Catalyzes the transfer of a phosphate group to glutamate to form L-glutamate 5-phosphate. In Rippkaea orientalis (strain PCC 8801 / RF-1) (Cyanothece sp. (strain PCC 8801)), this protein is Glutamate 5-kinase.